A 713-amino-acid chain; its full sequence is F-box/WD repeat-containing protein 7 (713 aa).

The disordered stretch occupies residues 1-150 (MNQELLSVGS…DEHTHNSNVT (150 aa)). The residue at position 26 (Ser-26) is a Phosphoserine. A compositionally biased stretch (basic and acidic residues) spans 46 to 55 (RHQEEEHTAR). The span at 69–84 (QNDSQQGQVEENNNRF) shows a compositional bias: polar residues. The segment covering 87–135 (VDEDSSGNQEEQEEDEEHAGEQEEEEEEEEEEEEEEEMDQESDDFDQSD) has biased composition (acidic residues). The stretch at 94–136 (NQEEQEEDEEHAGEQEEEEEEEEEEEEEEEMDQESDDFDQSDD) forms a coiled coil. Over residues 136-145 (DSSREDEHTH) the composition is skewed to basic and acidic residues. A Phosphothreonine modification is found at Thr-211. A Phosphoserine modification is found at Ser-233. The F-box domain maps to 284-330 (RDFISLLPKELALYVLSFLEPKDLLQAAQTCRYWRILAEDNLLWREK). WD repeat units follow at residues 384–424 (GHDD…RTLV), 426–462 (HTGG…CIHT), 465–504 (GHTS…HVLM), 506–542 (HVAA…CLHT), 545–584 (GHTN…HTLT), 586–624 (HQSL…QTLQ), and 628–665 (KHQS…FIRN).

Homodimer; homodimerization plays a role in substrate binding and/or ubiquitination and degradation. Component of the SCF(FBXW7) complex consisting of CUL1, RBX1, SKP1 and FBXW7. Interacts (via F-box domain) with SKP1. Interacts (via F-box domain) with pseudophosphatase STYX; the interaction is direct and prevents FBXW7 interaction with SKP1. Interacts with cyclin-E (CCNE1 or CCNE2). Interacts with PSEN1. Forms a trimeric complex with NOTCH1 and SGK1. Interacts with NOTCH1 intracellular domain/NICD and NOTCH4 intracellular domain/NICD. Interacts with NOTCH2 intracellular domain (N2ICD). Interacts with MYC (when phosphorylated). Interacts with USP28, counteracting ubiquitination of MYC. Interacts (when phosphorylated at Thr-211) with PIN1, disrupting FBXW7 dimerization and promoting FBXW7 autoubiquitination and degradation. Interacts with UBE2QL1. Interacts with FAM83D; promotes FBXW7 degradation. Interacts with MYCN; FBXW7 competes with AURKA for binding to unphosphorylated MYCN but not for binding to phosphorylated MYCN. Interacts with JUN. Found in a complex with JUN and PRR7. Interacts with JUN and PRR7; the interaction inhibits ubiquitination-mediated JUN degradation, promoting its phosphorylation and transcriptional activity. Interacts with NFE2L1. Interacts with NR1D1. Interacts with RICTOR; mediates RICTOR ubiquitination and degradation. Post-translationally, phosphorylation at Thr-211 promotes interaction with PIN1, leading to disrupt FBXW7 dimerization and promoting FBXW7 autoubiquitination and degradation. Phosphorylated by ATM at Ser-26 in response to DNA damage, promoting recruitment to DNA damage sites and 'Lys-63'-linked ubiquitination of phosphorylated XRCC4. Ubiquitinated: autoubiquitinates following phosphorylation at Thr-211 and subsequent interaction with PIN1. Ubiquitination leads to its degradation.

The protein localises to the nucleus. It localises to the nucleoplasm. Its subcellular location is the chromosome. Its pathway is protein modification; protein ubiquitination. Its function is as follows. Substrate recognition component of a SCF (SKP1-CUL1-F-box protein) E3 ubiquitin-protein ligase complex which mediates the ubiquitination and subsequent proteasomal degradation of target proteins. Recognizes and binds phosphorylated sites/phosphodegrons within target proteins and thereafter brings them to the SCF complex for ubiquitination. Identified substrates include cyclin-E (CCNE1 or CCNE2), JUN, MYC, NOTCH1 released notch intracellular domain (NICD), NOTCH2, MCL1, MLST8, RICTOR and probably PSEN1. Acts as a negative regulator of JNK signaling by binding to phosphorylated JUN and promoting its ubiquitination and subsequent degradation. SCF(FBXW7) complex mediates the ubiquitination and subsequent degradation of NFE2L1. Involved in bone homeostasis and negative regulation of osteoclast differentiation. Regulates the amplitude of the cyclic expression of hepatic core clock genes and genes involved in lipid and glucose metabolism via ubiquitination and proteasomal degradation of their transcriptional repressor NR1D1; CDK1-dependent phosphorylation of NR1D1 is necessary for SCF(FBXW7)-mediated ubiquitination. Also able to promote 'Lys-63'-linked ubiquitination in response to DNA damage. The SCF(FBXW7) complex facilitates double-strand break repair following phosphorylation by ATM: phosphorylation promotes localization to sites of double-strand breaks and 'Lys-63'-linked ubiquitination of phosphorylated XRCC4, enhancing DNA non-homologous end joining. The chain is F-box/WD repeat-containing protein 7 from Rattus norvegicus (Rat).